Consider the following 295-residue polypeptide: Protease HtpX (295 aa).

2 helical membrane passes run 4–24 (ILLF…TLSL) and 41–61 (SSLL…SLFI). Histidine 147 is a binding site for Zn(2+). Residue glutamate 148 is part of the active site. Histidine 151 is a Zn(2+) binding site. The next 2 helical transmembrane spans lie at 158 to 178 (VTLA…ARII) and 199 to 219 (VATI…VMWF). Position 224 (glutamate 224) interacts with Zn(2+).

The protein belongs to the peptidase M48B family. The cofactor is Zn(2+).

It is found in the cell inner membrane. The polypeptide is Protease HtpX (Pseudomonas putida (strain ATCC 47054 / DSM 6125 / CFBP 8728 / NCIMB 11950 / KT2440)).